The chain runs to 227 residues: Uracil-DNA glycosylase (227 aa).

Catalysis depends on aspartate 68, which acts as the Proton acceptor.

The protein belongs to the uracil-DNA glycosylase (UDG) superfamily. UNG family.

The protein localises to the cytoplasm. The catalysed reaction is Hydrolyzes single-stranded DNA or mismatched double-stranded DNA and polynucleotides, releasing free uracil.. Excises uracil residues from the DNA which can arise as a result of misincorporation of dUMP residues by DNA polymerase or due to deamination of cytosine. This Mycolicibacterium paratuberculosis (strain ATCC BAA-968 / K-10) (Mycobacterium paratuberculosis) protein is Uracil-DNA glycosylase.